We begin with the raw amino-acid sequence, 115 residues long: Probable non-functional T cell receptor beta variable 23-1 (115 aa).

The N-terminal stretch at 1–21 is a signal peptide; the sequence is MGTRLLGCAALCLLAADSFHA. Positions 22–115 constitute an Ig-like domain; the sequence is KVTQTPGHLV…TALYLCASSQ (94 aa). Residues Cys-42 and Cys-111 are joined by a disulfide bond.

Alpha-beta TR is a heterodimer composed of an alpha and beta chain; disulfide-linked. The alpha-beta TR is associated with the transmembrane signaling CD3 coreceptor proteins to form the TR-CD3 (TcR or TCR). The assembly of alpha-beta TR heterodimers with CD3 occurs in the endoplasmic reticulum where a single alpha-beta TR heterodimer associates with one CD3D-CD3E heterodimer, one CD3G-CD3E heterodimer and one CD247 homodimer forming a stable octameric structure. CD3D-CD3E and CD3G-CD3E heterodimers preferentially associate with TR alpha and TR beta chains, respectively. The association of the CD247 homodimer is the last step of TcR assembly in the endoplasmic reticulum and is required for transport to the cell surface.

It localises to the cell membrane. In terms of biological role, probable non-functional open reading frame (ORF) of V region of the variable domain of T cell receptor (TR) beta chain. Non-functional ORF generally cannot participate in the synthesis of a productive T cell receptor (TR) chain due to altered V-(D)-J or switch recombination and/or splicing site (at mRNA level) and/or conserved amino acid change (protein level). Alpha-beta T cell receptors are antigen specific receptors which are essential to the immune response and are present on the cell surface of T lymphocytes. Recognize peptide-major histocompatibility (MH) (pMH) complexes that are displayed by antigen presenting cells (APC), a prerequisite for efficient T cell adaptive immunity against pathogens. Binding of alpha-beta TR to pMH complex initiates TR-CD3 clustering on the cell surface and intracellular activation of LCK that phosphorylates the ITAM motifs of CD3G, CD3D, CD3E and CD247 enabling the recruitment of ZAP70. In turn ZAP70 phosphorylates LAT, which recruits numerous signaling molecules to form the LAT signalosome. The LAT signalosome propagates signal branching to three major signaling pathways, the calcium, the mitogen-activated protein kinase (MAPK) kinase and the nuclear factor NF-kappa-B (NF-kB) pathways, leading to the mobilization of transcription factors that are critical for gene expression and essential for T cell growth and differentiation. The T cell repertoire is generated in the thymus, by V-(D)-J rearrangement. This repertoire is then shaped by intrathymic selection events to generate a peripheral T cell pool of self-MH restricted, non-autoaggressive T cells. Post-thymic interaction of alpha-beta TR with the pMH complexes shapes TR structural and functional avidity. In Homo sapiens (Human), this protein is Probable non-functional T cell receptor beta variable 23-1.